The sequence spans 686 residues: Glycogenin (686 aa).

UDP contacts are provided by Leu-13, Asn-16, Tyr-19, and Arg-82. UDP-alpha-D-glucose is bound by residues Leu-13, Asn-16, Tyr-19, Arg-82, Lys-91, Asp-107, Ala-108, Asp-109, Asn-139, Thr-140, Asp-166, Asp-169, and Gln-170. Asp-107, Ala-108, and Asp-109 together coordinate UDP. Asp-107 provides a ligand contact to Mn(2+). Asp-109 is a Mn(2+) binding site. Residues Tyr-196 and Tyr-198 are each glycosylated (O-linked (Glc...) tyrosine). His-213, Gly-216, and Lys-219 together coordinate UDP. Residue His-213 coordinates Mn(2+). UDP-alpha-D-glucose-binding residues include Gly-216 and Lys-219. Disordered regions lie at residues 264–331, 381–444, 460–533, and 603–686; these read VKGE…ANFP, PEPT…RGNA, KHRR…GVPA, and KPLR…VLET. 2 stretches are compositionally biased toward low complexity: residues 285-308 and 398-416; these read SSQSHKTQSHQTQSQNTHSTYTSH and SAASTATPSAVASATASPT. The tract at residues 307–686 is not required for catalytic activity; it reads SHGASWDASR…TEEERDVLET (380 aa). 2 stretches are compositionally biased toward polar residues: residues 424–442 and 471–483; these read VTPTTPASANPWTSFTTRG and AATSRPTSPGRAQ. Residues 677–686 show a composition bias toward acidic residues; sequence TEEERDVLET.

Belongs to the glycosyltransferase 8 family. Glycogenin subfamily. In terms of assembly, interacts with glycogen synthase gsy-1; the interaction is direct. Requires Mn(2+) as cofactor.

Its subcellular location is the cytoplasm. It localises to the vacuole. It carries out the reaction L-tyrosyl-[glycogenin] + UDP-alpha-D-glucose = alpha-D-glucosyl-L-tyrosyl-[glycogenin] + UDP + H(+). The catalysed reaction is [1,4-alpha-D-glucosyl](n)-L-tyrosyl-[glycogenin] + UDP-alpha-D-glucose = [1,4-alpha-D-glucosyl](n+1)-L-tyrosyl-[glycogenin] + UDP + H(+). In terms of biological role, self-glucosylating initiator of glycogen synthesis. It catalyzes the formation of a short alpha (1,4)-glucosyl chain covalently attached via a glucose 1-O-tyrosyl linkage to internal tyrosine residues and these chains act as primers for the elongation reaction catalyzed by glycogen synthase. The chain is Glycogenin from Neurospora crassa (strain ATCC 24698 / 74-OR23-1A / CBS 708.71 / DSM 1257 / FGSC 987).